We begin with the raw amino-acid sequence, 558 residues long: Podocalyxin (558 aa).

The first 22 residues, 1 to 22, serve as a signal peptide directing secretion; it reads MRCALALSALLLLLSTPPLLPS. A compositionally biased stretch (pro residues) spans 20–29; sequence LPSSPSPSPS. Disordered stretches follow at residues 20–50, 83–210, and 270–338; these read LPSS…PTPA, LGVS…DHLM, and SVIS…VAHE. Over 23-461 the chain is Extracellular; that stretch reads SPSPSPSPSQ…EEAEDRFSMP (439 aa). Polar residues-rich tracts occupy residues 32 to 50 and 83 to 107; these read QNAT…PTPA and LGVS…NTTV. N33, N43, and N104 each carry an N-linked (GlcNAc...) asparagine glycan. A compositionally biased stretch (low complexity) spans 125–142; sequence STKSADTTTVATSTATAK. 3 stretches are compositionally biased toward polar residues: residues 143–173, 190–204, and 270–302; these read PNTT…LTST, RQPT…PTSS, and SVIS…TSPA. N-linked (GlcNAc...) asparagine glycosylation occurs at N144. The segment covering 313–324 has biased composition (low complexity); that stretch reads TMSSSPTAASTT. An N-linked (GlcNAc...) asparagine glycan is attached at N360. Residues 462 to 482 form a helical membrane-spanning segment; sequence LIITIVCMASFLLLVAALYGC. The Cytoplasmic segment spans residues 483–558; it reads CHQRLSQRKD…DLDEEEDTHL (76 aa). Position 518 is a phosphothreonine (T518). 2 positions are modified to phosphoserine: S529 and S537. T556 carries the post-translational modification Phosphothreonine.

It belongs to the podocalyxin family. As to quaternary structure, monomer; when associated with the membrane raft. Oligomer; when integrated in the apical membrane. Interacts (via the C-terminal PDZ-binding motif DTHL) with NHERF1 (via the PDZ domains); the interaction is not detected in glomerular epithelium cells, take place early in the secretory pathway and is necessary for its apical membrane sorting. Found in a complex with EZR, PODXL and NHERF2. Associates with the actin cytoskeleton through complex formation with EZR and NHERF2. Interacts (via the C-terminal PDZ-binding motif DTHL) with NHERF2 (via the PDZ 1 domain); interaction is detected in glomerular epithelium cells. Interacts with EZR. Post-translationally, N- and O-linked glycosylated. Sialoglycoprotein. As to expression, glomerular epithelium cell (podocyte).

It localises to the apical cell membrane. The protein resides in the cell projection. The protein localises to the lamellipodium. It is found in the filopodium. Its subcellular location is the ruffle. It localises to the microvillus. The protein resides in the membrane raft. The protein localises to the membrane. Its function is as follows. Involved in the regulation of both adhesion and cell morphology and cancer progression. Functions as an anti-adhesive molecule that maintains an open filtration pathway between neighboring foot processes in the podocyte by charge repulsion. Acts as a pro-adhesive molecule, enhancing the adherence of cells to immobilized ligands, increasing the rate of migration and cell-cell contacts in an integrin-dependent manner. Induces the formation of apical actin-dependent microvilli. Involved in the formation of a preapical plasma membrane subdomain to set up initial epithelial polarization and the apical lumen formation during renal tubulogenesis. Plays a role in cancer development and aggressiveness by inducing cell migration and invasion through its interaction with the actin-binding protein EZR. Affects EZR-dependent signaling events, leading to increased activities of the MAPK and PI3K pathways in cancer cells. The chain is Podocalyxin (PODXL) from Homo sapiens (Human).